Consider the following 175-residue polypeptide: Protein her-1 (175 aa).

The N-terminal stretch at 1–18 (MRYLPIFVFLGSFGYTET) is a signal peptide. 2 N-linked (GlcNAc...) asparagine glycosylation sites follow: N98 and N163.

The protein localises to the secreted. Its function is as follows. Dictates male development. Probably plays a direct role in cell signaling during C.elegans sex determination. Inhibits the function of tra-2a. The polypeptide is Protein her-1 (her-1) (Caenorhabditis elegans).